The primary structure comprises 357 residues: Protein RecA (357 aa).

Gly74 to Thr81 contributes to the ATP binding site.

The protein belongs to the RecA family.

The protein localises to the cytoplasm. Its function is as follows. Can catalyze the hydrolysis of ATP in the presence of single-stranded DNA, the ATP-dependent uptake of single-stranded DNA by duplex DNA, and the ATP-dependent hybridization of homologous single-stranded DNAs. It interacts with LexA causing its activation and leading to its autocatalytic cleavage. The polypeptide is Protein RecA (Bordetella petrii (strain ATCC BAA-461 / DSM 12804 / CCUG 43448)).